Here is a 341-residue protein sequence, read N- to C-terminus: Phosphate acyltransferase (341 aa).

Belongs to the PlsX family. In terms of assembly, homodimer. Probably interacts with PlsY.

The protein resides in the cytoplasm. The catalysed reaction is a fatty acyl-[ACP] + phosphate = an acyl phosphate + holo-[ACP]. It functions in the pathway lipid metabolism; phospholipid metabolism. Catalyzes the reversible formation of acyl-phosphate (acyl-PO(4)) from acyl-[acyl-carrier-protein] (acyl-ACP). This enzyme utilizes acyl-ACP as fatty acyl donor, but not acyl-CoA. This Chlorobaculum parvum (strain DSM 263 / NCIMB 8327) (Chlorobium vibrioforme subsp. thiosulfatophilum) protein is Phosphate acyltransferase.